A 255-amino-acid polypeptide reads, in one-letter code: Uridylate kinase (255 aa).

Residues 1-21 (MSAAAAGRGERLNHAGNPGHR) form a disordered region. Residue 30–33 (KLGG) participates in ATP binding. Gly71 contacts UMP. Positions 72 and 76 each coordinate ATP. Residues Asp91 and 152-159 (MGLPYFST) each bind UMP. ATP contacts are provided by Phe185 and Asp188.

This sequence belongs to the UMP kinase family. As to quaternary structure, homohexamer.

It is found in the cytoplasm. It catalyses the reaction UMP + ATP = UDP + ADP. It participates in pyrimidine metabolism; CTP biosynthesis via de novo pathway; UDP from UMP (UMPK route): step 1/1. With respect to regulation, inhibited by UTP. Its function is as follows. Catalyzes the reversible phosphorylation of UMP to UDP. This is Uridylate kinase from Mycobacterium leprae (strain TN).